We begin with the raw amino-acid sequence, 222 residues long: MSHLVKMENGQSQTIQEMLGCIERYNPDHLKILESYVQDQAKNNTYDLEANLAVLKLYQFNPHMLNFDITYTILLKCLTNLPHTDFVMAKCLLLPQQMKDENVQTIIDLADILERADFTLFWQRAEVNRTMFRHISGFHDSIRKFVSHVVGITFQTIKKDLLKELLGGIEDSTLESWIKRNGWKHQGQDLVVVATQDDKIKTKNITEKIEFENVGALMAQCI.

In terms of domain architecture, PCI spans 46–208; sequence YDLEANLAVL…KIKTKNITEK (163 aa).

The protein belongs to the eIF-3 subunit K family. In terms of assembly, component of the eukaryotic translation initiation factor 3 (eIF-3) complex. The eIF-3 complex interacts with pix.

It localises to the cytoplasm. Functionally, component of the eukaryotic translation initiation factor 3 (eIF-3) complex, which is involved in protein synthesis of a specialized repertoire of mRNAs and, together with other initiation factors, stimulates binding of mRNA and methionyl-tRNAi to the 40S ribosome. The eIF-3 complex specifically targets and initiates translation of a subset of mRNAs involved in cell proliferation. The chain is Eukaryotic translation initiation factor 3 subunit K from Drosophila mojavensis (Fruit fly).